A 244-amino-acid polypeptide reads, in one-letter code: 2,5-diamino-6-ribosylamino-4(3H)-pyrimidinone 5'-phosphate reductase (244 aa).

Residues T74, D78, I160, and G183 to I187 each bind NADP(+).

Belongs to the HTP reductase family. Homodimer.

It catalyses the reaction 2,5-diamino-6-(1-D-ribitylamino)pyrimidin-4(3H)-one 5'-phosphate + NADP(+) = 2,5-diamino-6-(1-D-ribosylamino)pyrimidin-4(3H)-one 5'-phosphate + NADPH + H(+). The catalysed reaction is 2,5-diamino-6-(1-D-ribitylamino)pyrimidin-4(3H)-one 5'-phosphate + NAD(+) = 2,5-diamino-6-(1-D-ribosylamino)pyrimidin-4(3H)-one 5'-phosphate + NADH + H(+). It participates in cofactor biosynthesis; riboflavin biosynthesis. Functionally, catalyzes an early step in riboflavin biosynthesis, the NADPH-dependent reduction of the ribose side chain of 2,5-diamino-6-ribosylamino-4(3H)-pyrimidinone 5'-phosphate, yielding 2,5-diamino-6-ribitylamino-4(3H)-pyrimidinone 5'-phosphate. The polypeptide is 2,5-diamino-6-ribosylamino-4(3H)-pyrimidinone 5'-phosphate reductase (RIB7) (Candida glabrata (strain ATCC 2001 / BCRC 20586 / JCM 3761 / NBRC 0622 / NRRL Y-65 / CBS 138) (Yeast)).